Consider the following 554-residue polypeptide: Valerianol synthase TPS1C (554 aa).

Positions 307 and 311 each coordinate Mg(2+). The DDXXD motif motif lies at 326-330 (VQRWD). Asp-452, Ser-456, and Glu-460 together coordinate Mg(2+).

The protein belongs to the terpene synthase family. It depends on Mg(2+) as a cofactor.

The enzyme catalyses (2E,6E)-farnesyl diphosphate + H2O = valerianol + diphosphate. The protein operates within secondary metabolite biosynthesis; terpenoid biosynthesis. Its function is as follows. Terpene synthase that catalyzes the biosynthesis of the terpene valerianol, which is a volatile compound of floral scent. The chain is Valerianol synthase TPS1C from Camellia hiemalis (Camellia).